The primary structure comprises 134 residues: RxLR effector protein 4 (134 aa).

Positions 1–22 are cleaved as a signal peptide; that stretch reads MRSLFYIAVAVAVFARSSAVAA. Residues 43–65 form a disordered region; sequence AMASSDSRKRFLRATDPEDGDLQ. Positions 48-58 are enriched in basic and acidic residues; sequence DSRKRFLRATD. The short motif at 52–71 is the RxLR-dEER element; that stretch reads RFLRATDPEDGDLQADDEER.

It belongs to the RxLR effector family.

The protein localises to the secreted. Functionally, effector that enhances plant susceptibility to P.parasitica in Nicotiana benthamiana and Arabidopsis thaliana. Triggers non-specific cell death in a variety of plants, including tobacco, tomato, potato and A.thaliana. E4-induced cell death is dependent on HSP90, NPK and SGT1, suggesting that PpE4 is recognized by the plant immune system. The protein is RxLR effector protein 4 of Phytophthora nicotianae (strain INRA-310) (Phytophthora parasitica).